The following is a 321-amino-acid chain: Lipoyl synthase (321 aa).

The tract at residues 1 to 21 (MRHRWEDRPVAPPPDGRPTEY) is disordered. The [4Fe-4S] cluster site is built by C63, C68, C74, C89, C93, C96, and S302. Positions 75–291 (WNNRTATFMI…KKLGLEMGFS (217 aa)) constitute a Radical SAM core domain. The interval 301–321 (SSYHAHEQTEDARRGALGARG) is disordered. Residues 304–314 (HAHEQTEDARR) show a composition bias toward basic and acidic residues.

This sequence belongs to the radical SAM superfamily. Lipoyl synthase family. The cofactor is [4Fe-4S] cluster.

The protein resides in the cytoplasm. The catalysed reaction is [[Fe-S] cluster scaffold protein carrying a second [4Fe-4S](2+) cluster] + N(6)-octanoyl-L-lysyl-[protein] + 2 oxidized [2Fe-2S]-[ferredoxin] + 2 S-adenosyl-L-methionine + 4 H(+) = [[Fe-S] cluster scaffold protein] + N(6)-[(R)-dihydrolipoyl]-L-lysyl-[protein] + 4 Fe(3+) + 2 hydrogen sulfide + 2 5'-deoxyadenosine + 2 L-methionine + 2 reduced [2Fe-2S]-[ferredoxin]. The protein operates within protein modification; protein lipoylation via endogenous pathway; protein N(6)-(lipoyl)lysine from octanoyl-[acyl-carrier-protein]: step 2/2. Functionally, catalyzes the radical-mediated insertion of two sulfur atoms into the C-6 and C-8 positions of the octanoyl moiety bound to the lipoyl domains of lipoate-dependent enzymes, thereby converting the octanoylated domains into lipoylated derivatives. This is Lipoyl synthase from Rubrobacter xylanophilus (strain DSM 9941 / JCM 11954 / NBRC 16129 / PRD-1).